The primary structure comprises 191 residues: uncharacterized protein (191 aa).

This is an uncharacterized protein from Archaeoglobus fulgidus (strain ATCC 49558 / DSM 4304 / JCM 9628 / NBRC 100126 / VC-16).